We begin with the raw amino-acid sequence, 126 residues long: Integrin alpha-M (126 aa).

Residues Asn-25, Asn-78, and Asn-106 are each glycosylated (N-linked (GlcNAc...) asparagine).

The protein belongs to the integrin alpha chain family. As to quaternary structure, heterodimer of an alpha and a beta chain. ITGAM associates with ITGB2. Found in a complex with CD177 and ITGB2/CD18. Interacts with JAM3. Interacts with THBD. Interacts with TMEM268; this interaction inhibits ITGAM degradation via the endosome-lysosome pathway.

Its subcellular location is the cell membrane. The protein resides in the membrane raft. In terms of biological role, integrin ITGAM/ITGB2 is implicated in various adhesive interactions of monocytes, macrophages and granulocytes as well as in mediating the uptake of complement-coated particles. It is identical with CR-3, the receptor for the iC3b fragment of the third complement component. It probably recognizes the R-G-D peptide in C3b. Integrin ITGAM/ITGB2 is also a receptor for fibrinogen, factor X and ICAM1. It recognizes P1 and P2 peptides of fibrinogen gamma chain. Regulates neutrophil migration. In association with beta subunit ITGB2/CD18, required for CD177-PRTN3-mediated activation of TNF primed neutrophils. May regulate phagocytosis-induced apoptosis in extravasated neutrophils. May play a role in mast cell development. Required with TYROBP/DAP12 in microglia to control production of microglial superoxide ions which promote the neuronal apoptosis that occurs during brain development. The chain is Integrin alpha-M (ITGAM) from Cavia porcellus (Guinea pig).